We begin with the raw amino-acid sequence, 417 residues long: Cyanophycinase (417 aa).

The signal sequence occupies residues 1–23; it reads MIRSFIRSSALLLALLPVTGYSA. Catalysis depends on charge relay system residues serine 169, aspartate 188, and histidine 222.

This sequence belongs to the peptidase S51 family.

It is found in the secreted. The catalysed reaction is [L-4-(L-arginin-2-N-yl)aspartate](n) + H2O = [L-4-(L-arginin-2-N-yl)aspartate](n-1) + L-4-(L-arginin-2-N-yl)aspartate. Inhibited by serine protease inhibitors. Inhibited by N-Bromo-succinimide. Exopeptidase that catalyzes the hydrolytic cleavage of multi-L-arginyl-poly-L-aspartic acid (cyanophycin; a water-insoluble reserve polymer) into aspartate-arginine dipeptides. This is Cyanophycinase (cphE) from Pseudomonas anguilliseptica.